We begin with the raw amino-acid sequence, 211 residues long: Glycerol-3-phosphate acyltransferase (211 aa).

Transmembrane regions (helical) follow at residues 5 to 25 (ALGM…ILFC), 58 to 78 (VLVF…ALGV), 80 to 100 (PLYL…PVFF), 112 to 132 (LGAI…TWLL), and 138 to 158 (GYSS…VWWF).

It belongs to the PlsY family. In terms of assembly, probably interacts with PlsX.

The protein localises to the cell inner membrane. It catalyses the reaction an acyl phosphate + sn-glycerol 3-phosphate = a 1-acyl-sn-glycero-3-phosphate + phosphate. Its pathway is lipid metabolism; phospholipid metabolism. Its function is as follows. Catalyzes the transfer of an acyl group from acyl-phosphate (acyl-PO(4)) to glycerol-3-phosphate (G3P) to form lysophosphatidic acid (LPA). This enzyme utilizes acyl-phosphate as fatty acyl donor, but not acyl-CoA or acyl-ACP. In Pectobacterium atrosepticum (strain SCRI 1043 / ATCC BAA-672) (Erwinia carotovora subsp. atroseptica), this protein is Glycerol-3-phosphate acyltransferase.